Consider the following 263-residue polypeptide: Uracil-DNA glycosylase (263 aa).

Asp94 (proton acceptor) is an active-site residue.

It belongs to the uracil-DNA glycosylase (UDG) superfamily. UNG family.

It is found in the cytoplasm. It carries out the reaction Hydrolyzes single-stranded DNA or mismatched double-stranded DNA and polynucleotides, releasing free uracil.. Functionally, excises uracil residues from the DNA which can arise as a result of misincorporation of dUMP residues by DNA polymerase or due to deamination of cytosine. The polypeptide is Uracil-DNA glycosylase (Ralstonia pickettii (strain 12J)).